The primary structure comprises 368 residues: GLABROUS1 enhancer-binding protein-like (368 aa).

A disordered region spans residues 1-123 (MAPKKAEEVV…TSDTEHVKKP (123 aa)). Residues 17-31 (SEEEESGSSGEESES) show a composition bias toward acidic residues. Residues 35 to 47 (VPKKVESSQKPES) are compositionally biased toward basic and acidic residues. Polar residues predominate over residues 84–97 (TSGSAATVPESSTA). Over residues 100 to 123 (PLKEAAPEAIKKQKTSDTEHVKKP) the composition is skewed to basic and acidic residues.

It belongs to the GeBP family. In terms of assembly, mono-, di- and oligomers. Associated with the Mediator complex. Interacts with MED6. Interacts with MED10A, MED28 and MED32. Interacts with DEK3.

Its subcellular location is the nucleus. In terms of biological role, transcription factor that binds promoters containing the CryR2 element, 5'-ACATAWCT-3'. The DNA-binding activity is decreased upon direct physical interaction with the mediator subunits and is modulated by redox conditions. The oxidized protein is the preferential binding form. This is GLABROUS1 enhancer-binding protein-like from Arabidopsis thaliana (Mouse-ear cress).